Reading from the N-terminus, the 702-residue chain is Translation factor GUF1 homolog, chloroplastic (702 aa).

The span at Met-1–Pro-30 shows a compositional bias: low complexity. The tract at residues Met-1–Asn-41 is disordered. The region spanning Ser-87–Pro-283 is the tr-type G domain. GTP contacts are provided by residues Ala-96–Ser-103, Asp-162–His-166, and Asn-216–Asp-219.

It belongs to the TRAFAC class translation factor GTPase superfamily. Classic translation factor GTPase family. LepA subfamily.

The protein localises to the plastid. Its subcellular location is the chloroplast. The catalysed reaction is GTP + H2O = GDP + phosphate + H(+). Promotes chloroplast protein synthesis. May act as a fidelity factor of the translation reaction, by catalyzing a one-codon backward translocation of tRNAs on improperly translocated ribosomes. In Micromonas pusilla (strain CCMP1545) (Picoplanktonic green alga), this protein is Translation factor GUF1 homolog, chloroplastic.